The following is a 425-amino-acid chain: Glucan 1,3-beta-glucosidase (425 aa).

A signal peptide spans 1–17 (MLLTFAPIFLLISSIVA). E214 acts as the Proton donor in catalysis. 2 disulfides stabilise this stretch: C301–C423 and C326–C352. K328 (nucleophile) is an active-site residue.

This sequence belongs to the glycosyl hydrolase 5 (cellulase A) family.

The protein resides in the secreted. It catalyses the reaction Successive hydrolysis of beta-D-glucose units from the non-reducing ends of (1-&gt;3)-beta-D-glucans, releasing alpha-glucose.. Functionally, beta-glucanases participate in the metabolism of beta-glucan, the main structural component of the cell wall. It could also function biosynthetically as a transglycosylase. The protein is Glucan 1,3-beta-glucosidase (EXG1) of Candida oleophila (Yeast).